We begin with the raw amino-acid sequence, 1737 residues long: Complement C4 (1737 aa).

The signal sequence occupies residues methionine 1–glutamine 19. Cysteines 66 and 95 form a disulfide. 2 N-linked (GlcNAc...) asparagine glycosylation sites follow: asparagine 224 and asparagine 664. Cysteines 633 and 667 form a disulfide. The propeptide occupies arginine 674–arginine 677. 3 cysteine pairs are disulfide-bonded: cysteine 700/cysteine 726, cysteine 701/cysteine 733, and cysteine 714/cysteine 734. The 35-residue stretch at cysteine 700–cysteine 734 folds into the Anaphylatoxin-like domain. Residue asparagine 743 is glycosylated (N-linked (GlcNAc...) asparagine). The isoglutamyl cysteine thioester (Cys-Gln) cross-link spans cysteine 1005–glutamine 1008. Residues asparagine 1323 and asparagine 1386 are each glycosylated (N-linked (GlcNAc...) asparagine). Sulfotyrosine is present on residues tyrosine 1412, tyrosine 1414, and tyrosine 1416. The propeptide occupies arginine 1443–arginine 1446. Cystine bridges form between cysteine 1464/cysteine 1528, cysteine 1576/cysteine 1581, cysteine 1588/cysteine 1666, cysteine 1611/cysteine 1735, and cysteine 1711/cysteine 1720. Positions cysteine 1588–cysteine 1735 constitute an NTR domain. Tyrosine 1676 is modified (sulfotyrosine).

As to quaternary structure, in absence of complement activation, circulates in blood as a disulfide-linked trimer of an alpha, beta and gamma chain. Complement C4b is composed of complement C4b-A, complement C4 beta and complement C4 gamma chains that are associated via disulfide bonds. Non-enzymatic component of the C3 convertase, also named C4bC2b, composed of the serine protease complement C2b (C2), as well as complement C4b. Non-enzymatic component of the C5 convertase, also named C4bC2bC3b, composed of the serine protease complement C2b (C2), complement C3b, as well as complement C4b. In terms of processing, prior to secretion, the single-chain precursor is enzymatically cleaved by plasminogen (PLG) to yield non-identical chains alpha, beta and gamma. During activation of the complement systems, the alpha chain is cleaved into C4a and C4b by different proteases depending on the complement pathway: C4b stays linked to the beta and gamma chains, while C4a is released in the plasma. The alpha chain is cleaved by C1S to generate C4a and C4b following activation by the classical complement system. The alpha chain is cleaved to generate C4a and C4b by MASP2 following activation by the lectin complement system. The alpha chain is cleaved by GZMK to generate C4a and C4b following activation by the GZMK complement system. Further degradation of C4b by C1 into the inactive fragments C4c and C4d blocks the generation of C3 convertase. The proteolytic cleavages often are incomplete so that many structural forms can be found in plasma. Post-translationally, upon activation, the internal thioester bond reacts with carbohydrate antigens on the target surface to form amide or ester bonds, leading to covalent association with the surface of pathogens. Complement C4b interacts with complement C3b via a thioester linkage. In terms of processing, N- and O-glycosylated. O-glycosylated with a core 1 or possibly core 8 glycan.

It localises to the secreted. The protein resides in the cell surface. Precursor of non-enzymatic components of the classical, lectin and GZMK complement pathways, which consist in a cascade of proteins that leads to phagocytosis and breakdown of pathogens and signaling that strengthens the adaptive immune system. Functionally, non-enzymatic component of C3 and C5 convertases. Generated following cleavage by complement proteases (C1S, MASP2 or GZMK, depending on the complement pathway), it covalently attaches to the surface of pathogens, where it acts as an opsonin that marks the surface of antigens for removal. It then recruits the serine protease complement C2b to form the C3 and C5 convertases, which cleave and activate C3 and C5, respectively, the next components of the complement pathways. Complement C4b-A isotype is responsible for effective binding to form amide bonds with immune aggregates or protein antigens, while complement C4b-B isotype catalyzes the transacylation of the thioester carbonyl group to form ester bonds with carbohydrate antigens. In terms of biological role, putative humoral mediator released following cleavage by complement proteases (C1S, MASP2 or GZMK, depending on the complement pathway). While it is strongly similar to anaphylatoxins, its role is unclear. Was reported to act as a mediator of local inflammatory process; however these effects were probably due to contamination with C3a and/C5a anaphylatoxins in biological assays. The chain is Complement C4 from Rattus norvegicus (Rat).